Reading from the N-terminus, the 311-residue chain is Energy-coupling factor transporter ATP-binding protein EcfA (311 aa).

One can recognise an ABC transporter domain in the interval 2 to 237; sequence IELRDLSYSY…AELIRRASLR (236 aa). 35–42 is a binding site for ATP; sequence GPNGAGKS.

The protein belongs to the ABC transporter superfamily. Energy-coupling factor EcfA family. Forms a stable energy-coupling factor (ECF) transporter complex composed of 2 membrane-embedded substrate-binding proteins (S component), 2 ATP-binding proteins (A component) and 2 transmembrane proteins (T component).

It localises to the cell membrane. In terms of biological role, ATP-binding (A) component of a common energy-coupling factor (ECF) ABC-transporter complex. Unlike classic ABC transporters this ECF transporter provides the energy necessary to transport a number of different substrates. This is Energy-coupling factor transporter ATP-binding protein EcfA from Methanothermobacter thermautotrophicus (strain ATCC 29096 / DSM 1053 / JCM 10044 / NBRC 100330 / Delta H) (Methanobacterium thermoautotrophicum).